We begin with the raw amino-acid sequence, 1345 residues long: Rho guanine nucleotide exchange factor 10 (1345 aa).

Disordered regions lie at residues M1–L84 and T99–L120. Residues N22–P39 are compositionally biased toward acidic residues. Residues E40–G54 show a composition bias toward basic and acidic residues. Residues Q102–A111 are compositionally biased toward polar residues. A Phosphoserine modification is found at S157. 2 disordered regions span residues V158 to A195 and M207 to S273. Polar residues predominate over residues Q171–G191. A compositionally biased stretch (acidic residues) spans D224 to E239. The span at G242–F255 shows a compositional bias: low complexity. A coiled-coil region spans residues G307–D335. S355 carries the phosphoserine modification. Residues V397–R584 form the DH domain. Disordered regions lie at residues D1202–T1237 and K1253–S1306. Residues L1256–S1271 are compositionally biased toward low complexity. The residue at position 1262 (S1262) is a Phosphoserine. Position 1314 is an N5-methylglutamine (Q1314).

Methylated at Gln-1314 by N6AMT1. In terms of tissue distribution, ubiquitously expressed.

Its function is as follows. May play a role in developmental myelination of peripheral nerves. The protein is Rho guanine nucleotide exchange factor 10 (Arhgef10) of Mus musculus (Mouse).